A 1127-amino-acid polypeptide reads, in one-letter code: DNA-directed RNA polymerase I subunit RPA2 homolog (1127 aa).

The residue at position 1025 (Ser-1025) is a Phosphoserine.

Belongs to the RNA polymerase beta chain family. In terms of assembly, component of the RNA polymerase I (Pol I) complex consisting of at least 13 subunits.

The protein localises to the nucleus. Its subcellular location is the nucleolus. The catalysed reaction is RNA(n) + a ribonucleoside 5'-triphosphate = RNA(n+1) + diphosphate. With respect to regulation, antisense ribosomal siRNAs silence rRNA expression during the elongation phase by decreasing rpoa-2 occupancy downstream of the RNAi-targeted region in nrde-2-dependent manner. Functionally, DNA-dependent RNA polymerase catalyzes the transcription of DNA into RNA using the four ribonucleoside triphosphates as substrates. Second largest core component of RNA polymerase I which synthesizes ribosomal RNA precursors. Proposed to contribute to the polymerase catalytic activity and forms the polymerase active center together with the largest subunit. Pol I is composed of mobile elements and RPA2 is part of the core element with the central large cleft and probably a clamp element that moves to open and close the cleft. Specifically binds to 18S, 5.8S and 26S rDNA, but not to 5S rDNA. This Caenorhabditis elegans protein is DNA-directed RNA polymerase I subunit RPA2 homolog.